The primary structure comprises 151 residues: Putative pre-16S rRNA nuclease (151 aa).

The protein belongs to the YqgF nuclease family.

The protein resides in the cytoplasm. Could be a nuclease involved in processing of the 5'-end of pre-16S rRNA. The sequence is that of Putative pre-16S rRNA nuclease from Neisseria gonorrhoeae (strain ATCC 700825 / FA 1090).